The primary structure comprises 409 residues: MPSIVSLTAALTFVGAVIASPVEKRSAFSVEQVPHTTYLKNGPAQKVKTLRKYGKPVPQSLLDAAESRDAVGETFTASAVGDGSDPAVPSDQYDSSYLSPVTVGSTTVELDFDTGSADLWVFSSLQASSQLSGHQYYQADASKLKSGYSWKISYGDGSGASGKVYADKVVVGGVTATSQAVEAATSVSAQFSRDSNTDGLLGLAFSSINTVSPEPQKTFFDTVKPQLAEPLFAVNLKYHAAGTYDFGYIDKSKYTGPITYVNVDDSQGFWGISATAYGVGGTTTQRAISGILDTGTTLVYTDTAIVKAYYAKVSGAKLDNIQGGYVFPCSATLPNFSITVGGVAQVVPGKHINYSPVDSSGTTCFGGIQTNDGLGMSIFGDIFLKSKYVVHEAAPDSPPRIGLAQSASV.

The signal sequence occupies residues 1–19 (MPSIVSLTAALTFVGAVIA). Residues 20–65 (SPVEKRSAFSVEQVPHTTYLKNGPAQKVKTLRKYGKPVPQSLLDAA) constitute a propeptide, activation peptide. A Peptidase A1 domain is found at 97–404 (YLSPVTVGST…PDSPPRIGLA (308 aa)). Active-site residues include aspartate 113 and aspartate 293. Residues cysteine 329 and cysteine 364 are joined by a disulfide bond. The N-linked (GlcNAc...) asparagine glycan is linked to asparagine 335.

It belongs to the peptidase A1 family. Monomer.

It is found in the secreted. Secreted aspartic endopeptidase that allows assimilation of proteinaceous substrates. The scissile peptide bond is attacked by a nucleophilic water molecule activated by two aspartic residues in the active site. Shows a broad primary substrate specificity. Favors hydrophobic residues at the P1 and P1' positions. The chain is Aspartic protease pepA from Leptosphaeria maculans (strain JN3 / isolate v23.1.3 / race Av1-4-5-6-7-8) (Blackleg fungus).